The primary structure comprises 210 residues: Imidazole glycerol phosphate synthase subunit HisH (210 aa).

Positions methionine 1–glycine 205 constitute a Glutamine amidotransferase type-1 domain. The active-site Nucleophile is the cysteine 79. Residues histidine 180 and glutamate 182 contribute to the active site.

Heterodimer of HisH and HisF.

It localises to the cytoplasm. It carries out the reaction 5-[(5-phospho-1-deoxy-D-ribulos-1-ylimino)methylamino]-1-(5-phospho-beta-D-ribosyl)imidazole-4-carboxamide + L-glutamine = D-erythro-1-(imidazol-4-yl)glycerol 3-phosphate + 5-amino-1-(5-phospho-beta-D-ribosyl)imidazole-4-carboxamide + L-glutamate + H(+). The enzyme catalyses L-glutamine + H2O = L-glutamate + NH4(+). It participates in amino-acid biosynthesis; L-histidine biosynthesis; L-histidine from 5-phospho-alpha-D-ribose 1-diphosphate: step 5/9. IGPS catalyzes the conversion of PRFAR and glutamine to IGP, AICAR and glutamate. The HisH subunit catalyzes the hydrolysis of glutamine to glutamate and ammonia as part of the synthesis of IGP and AICAR. The resulting ammonia molecule is channeled to the active site of HisF. In Herpetosiphon aurantiacus (strain ATCC 23779 / DSM 785 / 114-95), this protein is Imidazole glycerol phosphate synthase subunit HisH.